Here is a 688-residue protein sequence, read N- to C-terminus: Glycine--tRNA ligase beta subunit (688 aa).

This sequence belongs to the class-II aminoacyl-tRNA synthetase family. Tetramer of two alpha and two beta subunits.

The protein resides in the cytoplasm. It catalyses the reaction tRNA(Gly) + glycine + ATP = glycyl-tRNA(Gly) + AMP + diphosphate. The protein is Glycine--tRNA ligase beta subunit of Syntrophomonas wolfei subsp. wolfei (strain DSM 2245B / Goettingen).